Reading from the N-terminus, the 48-residue chain is Ambineela (48 aa).

As to quaternary structure, monomer. The blue color is due to an unidentified non-fluorescent cofactor, covalently bound to it.

In terms of biological role, ambineela is a blue protein and has a pI of 8.7. The protein is Ambineela of Acidianus ambivalens (Desulfurolobus ambivalens).